The following is a 913-amino-acid chain: Protein ECT2 (913 aa).

Ala2 is subject to N-acetylalanine. 2 consecutive BRCT domains span residues 176 to 260 and 266 to 354; these read MLNL…AAVD and FKVP…MYLY. Thr359 is modified (phosphothreonine; by PKC/PRKCI). Phosphoserine occurs at positions 367 and 370. Thr373 carries the post-translational modification Phosphothreonine. Phosphoserine is present on Ser376. 2 consecutive short sequence motifs (nuclear localization signal) follow at residues 378-382 and 401-405; these read RKRRR and PRKRP. 2 disordered regions span residues 389-415 and 427-450; these read QLSR…SIGS and IHYG…PPKQ. Thr444 carries the post-translational modification Phosphothreonine; by CDK1. The DH domain occupies 452–641; the sequence is ARWQVAKELY…KEVMTHINED (190 aa). Lys611 participates in a covalent cross-link: Glycyl lysine isopeptide (Lys-Gly) (interchain with G-Cter in SUMO2). The region spanning 675 to 794 is the PH domain; sequence RVETVSLGEH…KMLCRHVANT (120 aa). Residues Ser716 and Ser842 each carry the phosphoserine modification. Thr846 carries the post-translational modification Phosphothreonine; by CDK1. The tract at residues 853–874 is disordered; the sequence is MALSSSHSSEGRSPPSSGKLAV. Residues 856–870 are compositionally biased toward low complexity; sequence SSSHSSEGRSPPSSG. Phosphoserine occurs at positions 861 and 865.

Homodimer. Homooligomer. Found in the centralspindlin complex. Interacts with NR1I3. Interacts (Thr-359 phosphorylated form) with PARD6A; the interaction is observed in cancer cells. Interacts (Thr-359 phosphorylated form) with PRKCI; the interaction is observed in cancer cells. Interacts with PKP4; the interaction is observed at the midbody. Interacts with RACGAP1; the interaction is direct, occurs in a microtubule-dependent manner, occurs at anaphase and during cytokinesis, is inhibited in metaphase by phosphorylation of ECT2 on Thr-373 and is stimulated in early anaphase by dephosphorylation of ECT2 probably on Thr-373 through CDK1 activity. Interacts with PLK1; the interaction is stimulated upon its phosphorylation on Thr-444. Interacts with RHOA; the interaction results in allosteric activation of ECT2. Interacts with KIF23, PARD3, PARD6B and PRKCQ. Interacts with NEDD9/HEF1. Phosphorylated by PLK1 in vitro. Hyperphosphorylated during the G2 phase of the cell cycle. Phosphorylation at Thr-373 occurs during the G2/M phase, relieves its auto-inhibition status and stimulates its GEF activity. Phosphorylation at Thr-444 in G2/M phase is required for subsequent binding with PLK1 and Rho exchange activation. Dephosphorylated at the time of cytokinesis. Phosphorylation at Thr-359 is required for its transformation activity in cancer cells. In terms of tissue distribution, highest expression in testis. Also detectable in brain, kidney, liver and spleen.

It is found in the nucleus. The protein resides in the cytoplasm. The protein localises to the cytoskeleton. Its subcellular location is the spindle. It localises to the cleavage furrow. It is found in the midbody. The protein resides in the cell junction. The protein localises to the tight junction. Autoinhibited by the C-terminal PH domain which folds back and binds to the surface of the DH domain, blocking binding of RHOA to the catalytic center of the DH domain. The 2nd BRCT domain is also involved in inhibition, probably by helping to impede RHOA binding. Allosterically activated by binding of activated GTP-bound RHOA to the PH domain which stimulates the release of PH inhibition and promotes the binding of substrate RHOA to the catalytic center. Binding of phosphorylated RACGAP1 to the N-terminal BRCT domain-containing region also releases autoinhibition. Guanine nucleotide exchange factor (GEF) that catalyzes the exchange of GDP for GTP. Promotes guanine nucleotide exchange on the Rho family members of small GTPases, like RHOA, RHOC, RAC1 and CDC42. Required for signal transduction pathways involved in the regulation of cytokinesis. Component of the centralspindlin complex that serves as a microtubule-dependent and Rho-mediated signaling required for the myosin contractile ring formation during the cell cycle cytokinesis. Regulates the translocation of RHOA from the central spindle to the equatorial region. Plays a role in the control of mitotic spindle assembly; regulates the activation of CDC42 in metaphase for the process of spindle fibers attachment to kinetochores before chromosome congression. Involved in the regulation of epithelial cell polarity; participates in the formation of epithelial tight junctions in a polarity complex PARD3-PARD6-protein kinase PRKCQ-dependent manner. Plays a role in the regulation of neurite outgrowth. Inhibits phenobarbital (PB)-induced NR1I3 nuclear translocation. Stimulates the activity of RAC1 through its association with the oncogenic PARD6A-PRKCI complex in cancer cells, thereby acting to coordinately drive tumor cell proliferation and invasion. Also stimulates genotoxic stress-induced RHOB activity in breast cancer cells leading to their cell death. In Mus musculus (Mouse), this protein is Protein ECT2 (Ect2).